A 439-amino-acid chain; its full sequence is Glucose-6-phosphate 1-dehydrogenase (439 aa).

Residue K100 participates in NADP(+) binding. 4 residues coordinate substrate: H130, K134, E168, and D187. H192 serves as the catalytic Proton acceptor. K288 lines the substrate pocket.

The protein belongs to the glucose-6-phosphate dehydrogenase family.

It catalyses the reaction D-glucose 6-phosphate + NADP(+) = 6-phospho-D-glucono-1,5-lactone + NADPH + H(+). It participates in carbohydrate degradation; pentose phosphate pathway; D-ribulose 5-phosphate from D-glucose 6-phosphate (oxidative stage): step 1/3. Its function is as follows. Catalyzes the oxidation of glucose 6-phosphate to 6-phosphogluconolactone. This Chlamydia trachomatis serovar D (strain ATCC VR-885 / DSM 19411 / UW-3/Cx) protein is Glucose-6-phosphate 1-dehydrogenase.